The chain runs to 183 residues: Large ribosomal subunit protein uL6 (183 aa).

It belongs to the universal ribosomal protein uL6 family. As to quaternary structure, part of the 50S ribosomal subunit.

Its function is as follows. This protein binds to the 23S rRNA, and is important in its secondary structure. It is located near the subunit interface in the base of the L7/L12 stalk, and near the tRNA binding site of the peptidyltransferase center. This Chlamydia trachomatis serovar D (strain ATCC VR-885 / DSM 19411 / UW-3/Cx) protein is Large ribosomal subunit protein uL6.